We begin with the raw amino-acid sequence, 416 residues long: MAQRVCIIGAGVVGLATAYALVREGFDVTLVEARERGGLETSYANGGQLSYRYVAPLADSGVPAQALGWLLRNDAPLRLRPRLDPAQWRWLLGFLAACRGSLNRRNAAHLLRLALLSQRTLQDWREEDGLDGFDWRRNGKLVAFRQPASFARARQGLADPSAQFVLTAAECLALEPALSAAPFVGGIHTPDEEVADCHAFCVQLAERLQASGHCRQLHGRRVTKIVEGGAAVRGVEVGGDLIEADHVVLAAGYRSAELMLPGLRLPLYPLKGYSLTLPVGAQHRAPDTSITDYDRKIVYARIGERLRIAAMVDIVGFDPGLEPARLALLRQQARDTFPQGGDFDAAVEWAGMRPATPTGVPLVGNGGYRNLWLNLGHGALGFTLACGSGRLLAEQIGRRPPSIDTTGLLPRGALAG.

Valine 5–tyrosine 19 provides a ligand contact to FAD.

It belongs to the DadA oxidoreductase family. The cofactor is FAD.

It catalyses the reaction a D-alpha-amino acid + A + H2O = a 2-oxocarboxylate + AH2 + NH4(+). In terms of biological role, oxidative deamination of D-amino acids. In Pseudomonas aeruginosa (strain ATCC 15692 / DSM 22644 / CIP 104116 / JCM 14847 / LMG 12228 / 1C / PRS 101 / PAO1), this protein is D-amino acid dehydrogenase 2 (dadA2).